The primary structure comprises 314 residues: DNA topoisomerase 1 (314 aa).

Residues 73–314 enclose the Topo IB-type catalytic domain; it reads GKMHVQRRNS…TDYITNTQTV (242 aa). The active-site O-(3'-phospho-DNA)-tyrosine intermediate is Y273.

The protein belongs to the type IB topoisomerase family.

It catalyses the reaction ATP-independent breakage of single-stranded DNA, followed by passage and rejoining.. Releases the supercoiling and torsional tension of DNA introduced during the DNA replication and transcription by transiently cleaving and rejoining one strand of the DNA duplex. Introduces a single-strand break via transesterification at a target site in duplex DNA. The scissile phosphodiester is attacked by the catalytic tyrosine of the enzyme, resulting in the formation of a DNA-(3'-phosphotyrosyl)-enzyme intermediate and the expulsion of a 5'-OH DNA strand. The free DNA strand then undergoes passage around the unbroken strand thus removing DNA supercoils. Finally, in the religation step, the DNA 5'-OH attacks the covalent intermediate to expel the active-site tyrosine and restore the DNA phosphodiester backbone. The polypeptide is DNA topoisomerase 1 (TOP1) (Oryctolagus cuniculus (Rabbit)).